A 201-amino-acid chain; its full sequence is Alpha-1-acid glycoprotein (201 aa).

Positions M1–A18 are cleaved as a signal peptide. N-linked (GlcNAc...) asparagine glycans are attached at residues N25, N33, N87, N93, N103, and N169. Cysteines 90 and 183 form a disulfide.

This sequence belongs to the calycin superfamily. Lipocalin family.

The protein localises to the secreted. Functionally, functions as a transport protein in the blood stream. Binds various ligands in the interior of its beta-barrel domain. Appears to function in modulating the activity of the immune system during the acute-phase reaction. The chain is Alpha-1-acid glycoprotein (ORM1) from Oryctolagus cuniculus (Rabbit).